A 417-amino-acid chain; its full sequence is Mitochondrial inner membrane i-AAA protease supercomplex subunit MGR1 (417 aa).

Positions Met-1–Asn-28 are disordered. Over Met-1–Gly-56 the chain is Mitochondrial intermembrane. Residues Asp-15–Asn-28 are compositionally biased toward basic and acidic residues. A helical membrane pass occupies residues Leu-57–Trp-73. Over Arg-74–Lys-151 the chain is Mitochondrial matrix. A helical transmembrane segment spans residues Leu-152–Leu-169. Over Thr-170–His-417 the chain is Mitochondrial intermembrane. Over residues Ser-391–Gln-401 the composition is skewed to polar residues. A disordered region spans residues Ser-391–His-417.

The protein belongs to the MGR1 family. As to quaternary structure, component of the mitochondrial inner membrane i-AAA protease supercomplex composed of MGR1, MGR3 and YME1. With MGR3, forms a subcomplex that binds to YME1 and to substrates to facilitate proteolysis. Interacts directly with YME1.

The protein resides in the mitochondrion inner membrane. Its function is as follows. Component of the mitochondrial inner membrane i-AAA protease supercomplex required for mitochondrial inner membrane protein turnover. Together with MGR3, functions in an adapter complex that targets substrates to the i-AAA protease for degradation. Required for growth of cells lacking the mitochondrial genome. This is Mitochondrial inner membrane i-AAA protease supercomplex subunit MGR1 (MGR1) from Saccharomyces cerevisiae (strain ATCC 204508 / S288c) (Baker's yeast).